The sequence spans 459 residues: Bifunctional protein GlmU (459 aa).

The pyrophosphorylase stretch occupies residues Met1–Arg229. Residues Leu8–Gly11, Lys22, Gln72, and Gly77–Thr78 each bind UDP-N-acetyl-alpha-D-glucosamine. Position 102 (Asp102) interacts with Mg(2+). Positions 139, 154, 169, and 227 each coordinate UDP-N-acetyl-alpha-D-glucosamine. Asn227 serves as a coordination point for Mg(2+). A linker region spans residues Val230–Asn250. Residues Gly251–Lys459 are N-acetyltransferase. Positions 332 and 350 each coordinate UDP-N-acetyl-alpha-D-glucosamine. His362 functions as the Proton acceptor in the catalytic mechanism. The UDP-N-acetyl-alpha-D-glucosamine site is built by Tyr365 and Asn376. Acetyl-CoA is bound by residues Ala379, Asn385–Tyr386, Ser404, Ala422, and Arg439.

It in the N-terminal section; belongs to the N-acetylglucosamine-1-phosphate uridyltransferase family. This sequence in the C-terminal section; belongs to the transferase hexapeptide repeat family. As to quaternary structure, homotrimer. Requires Mg(2+) as cofactor.

It localises to the cytoplasm. It carries out the reaction alpha-D-glucosamine 1-phosphate + acetyl-CoA = N-acetyl-alpha-D-glucosamine 1-phosphate + CoA + H(+). The catalysed reaction is N-acetyl-alpha-D-glucosamine 1-phosphate + UTP + H(+) = UDP-N-acetyl-alpha-D-glucosamine + diphosphate. Its pathway is nucleotide-sugar biosynthesis; UDP-N-acetyl-alpha-D-glucosamine biosynthesis; N-acetyl-alpha-D-glucosamine 1-phosphate from alpha-D-glucosamine 6-phosphate (route II): step 2/2. It functions in the pathway nucleotide-sugar biosynthesis; UDP-N-acetyl-alpha-D-glucosamine biosynthesis; UDP-N-acetyl-alpha-D-glucosamine from N-acetyl-alpha-D-glucosamine 1-phosphate: step 1/1. The protein operates within bacterial outer membrane biogenesis; LPS lipid A biosynthesis. Functionally, catalyzes the last two sequential reactions in the de novo biosynthetic pathway for UDP-N-acetylglucosamine (UDP-GlcNAc). The C-terminal domain catalyzes the transfer of acetyl group from acetyl coenzyme A to glucosamine-1-phosphate (GlcN-1-P) to produce N-acetylglucosamine-1-phosphate (GlcNAc-1-P), which is converted into UDP-GlcNAc by the transfer of uridine 5-monophosphate (from uridine 5-triphosphate), a reaction catalyzed by the N-terminal domain. In Streptococcus sanguinis (strain SK36), this protein is Bifunctional protein GlmU.